A 196-amino-acid chain; its full sequence is Elongation factor Ts (196 aa).

The tract at residues 80–83 is involved in Mg(2+) ion dislocation from EF-Tu; it reads TDFV.

The protein belongs to the EF-Ts family. As to quaternary structure, heterotetramer composed of two EF-Ts.EF-Tu dimer complexes.

The protein localises to the cytoplasm. Functionally, associates with the EF-Tu.GDP complex and induces the exchange of GDP to GTP. It remains bound to the aminoacyl-tRNA.EF-Tu.GTP complex up to the GTP hydrolysis stage on the ribosome. The polypeptide is Elongation factor Ts (tsf) (Thermus thermophilus (strain ATCC 27634 / DSM 579 / HB8)).